The primary structure comprises 94 residues: Co-chaperonin GroES (94 aa).

Residues 17–53 (DSNPNSPIQLPDSAKKKPTKGKVVSVGPGASNSDGKV) are disordered.

Belongs to the GroES chaperonin family. In terms of assembly, heptamer of 7 subunits arranged in a ring. Interacts with the chaperonin GroEL.

It localises to the cytoplasm. In terms of biological role, together with the chaperonin GroEL, plays an essential role in assisting protein folding. The GroEL-GroES system forms a nano-cage that allows encapsulation of the non-native substrate proteins and provides a physical environment optimized to promote and accelerate protein folding. GroES binds to the apical surface of the GroEL ring, thereby capping the opening of the GroEL channel. The sequence is that of Co-chaperonin GroES from Anaplasma phagocytophilum (strain HZ).